The following is a 486-amino-acid chain: Protein nucleotidyltransferase YdiU (486 aa).

ATP-binding residues include glycine 90, glycine 92, arginine 93, lysine 113, aspartate 125, glycine 126, arginine 176, and arginine 183. The active-site Proton acceptor is aspartate 252. 2 residues coordinate Mg(2+): asparagine 253 and aspartate 262. Aspartate 262 serves as a coordination point for ATP.

This sequence belongs to the SELO family. The cofactor is Mg(2+). Mn(2+) serves as cofactor.

It catalyses the reaction L-seryl-[protein] + ATP = 3-O-(5'-adenylyl)-L-seryl-[protein] + diphosphate. It carries out the reaction L-threonyl-[protein] + ATP = 3-O-(5'-adenylyl)-L-threonyl-[protein] + diphosphate. The enzyme catalyses L-tyrosyl-[protein] + ATP = O-(5'-adenylyl)-L-tyrosyl-[protein] + diphosphate. The catalysed reaction is L-histidyl-[protein] + UTP = N(tele)-(5'-uridylyl)-L-histidyl-[protein] + diphosphate. It catalyses the reaction L-seryl-[protein] + UTP = O-(5'-uridylyl)-L-seryl-[protein] + diphosphate. It carries out the reaction L-tyrosyl-[protein] + UTP = O-(5'-uridylyl)-L-tyrosyl-[protein] + diphosphate. In terms of biological role, nucleotidyltransferase involved in the post-translational modification of proteins. It can catalyze the addition of adenosine monophosphate (AMP) or uridine monophosphate (UMP) to a protein, resulting in modifications known as AMPylation and UMPylation. This is Protein nucleotidyltransferase YdiU from Pseudomonas entomophila (strain L48).